Reading from the N-terminus, the 147-residue chain is Large ribosomal subunit protein uL13 (147 aa).

The protein belongs to the universal ribosomal protein uL13 family. In terms of assembly, part of the 50S ribosomal subunit.

Functionally, this protein is one of the early assembly proteins of the 50S ribosomal subunit, although it is not seen to bind rRNA by itself. It is important during the early stages of 50S assembly. The sequence is that of Large ribosomal subunit protein uL13 from Pseudothermotoga lettingae (strain ATCC BAA-301 / DSM 14385 / NBRC 107922 / TMO) (Thermotoga lettingae).